A 458-amino-acid chain; its full sequence is DNA repair protein RadA (458 aa).

The segment at 10–27 (CQSCGYESPKWMGKCPGC) adopts a C4-type zinc-finger fold. Position 98–105 (98–105 (GDPGIGKS)) interacts with ATP. The short motif at 255–259 (KNRFG) is the RadA KNRFG motif element. A lon-protease-like region spans residues 354–458 (DAYLKVAGGV…AEALRTSLGG (105 aa)).

The protein belongs to the RecA family. RadA subfamily. Interacts with DisA.

DNA-dependent ATPase involved in processing of recombination intermediates, plays a role in repairing DNA breaks. Stimulates the branch migration of RecA-mediated strand transfer reactions, allowing the 3' invading strand to extend heteroduplex DNA faster. Binds ssDNA in the presence of ADP but not other nucleotides, has ATPase activity that is stimulated by ssDNA and various branched DNA structures, but inhibited by SSB. Does not have RecA's homology-searching function. In terms of biological role, plays a role in DNA repair. Might stabilize or process Holliday junction intermediates. May work with DisA following methyl methanesulfonate (MMS) but not H(2)O(2) damage; DisA is a DNA integrity scanning protein with c-di-AMP synthase activity. This Bacillus subtilis (strain 168) protein is DNA repair protein RadA.